Here is a 195-residue protein sequence, read N- to C-terminus: Interferon tau (195 aa).

A signal peptide spans 1-23 (MAFVLSLLMALVLASYSPGGSLG). 2 disulfides stabilise this stretch: Cys24–Cys122 and Cys52–Cys162.

It belongs to the alpha/beta interferon family. IFN-alphaII subfamily. In terms of tissue distribution, constitutively and exclusively expressed in the mononuclear cells of the extraembryonic trophectoderm.

The protein localises to the secreted. Paracrine hormone primarily responsible for maternal recognition of pregnancy. Interacts with endometrial receptors, probably type I interferon receptors, and blocks estrogen receptor expression, preventing the estrogen-induced increase in oxytocin receptor expression in the endometrium. This results in the suppression of the pulsatile endometrial release of the luteolytic hormone prostaglandin F2-alpha, hindering the regression of the corpus luteum (luteolysis) and therefore a return to ovarian cyclicity. This, and a possible direct effect of IFN-tau on prostaglandin synthesis, leads in turn to continued ovarian progesterone secretion, which stimulates the secretion by the endometrium of the nutrients required for the growth of the conceptus. In summary, displays particularly high antiviral and antiproliferative potency concurrently with particular weak cytotoxicity, high antiluteolytic activity and immunomodulatory properties. In contrast with other IFNs, IFN-tau is not virally inducible. The chain is Interferon tau (IFNT) from Cervus elaphus (Red deer).